A 92-amino-acid polypeptide reads, in one-letter code: Acylphosphatase (92 aa).

C5 and C49 are joined by a disulfide. The 88-residue stretch at C5 to R92 folds into the Acylphosphatase-like domain. Catalysis depends on residues R20 and N38.

This sequence belongs to the acylphosphatase family.

It catalyses the reaction an acyl phosphate + H2O = a carboxylate + phosphate + H(+). The protein is Acylphosphatase of Escherichia coli O157:H7.